A 342-amino-acid polypeptide reads, in one-letter code: Dihydroorotase (342 aa).

Histidine 13 and histidine 15 together coordinate Zn(2+). Substrate is bound by residues 15–17 (HLR) and asparagine 41. Zn(2+)-binding residues include lysine 97, histidine 134, and histidine 172. At lysine 97 the chain carries N6-carboxylysine. Histidine 134 contacts substrate. Substrate is bound at residue leucine 217. Aspartate 245 contacts Zn(2+). Residue aspartate 245 is part of the active site. Residues histidine 249 and alanine 261 each contribute to the substrate site.

The protein belongs to the metallo-dependent hydrolases superfamily. DHOase family. Class II DHOase subfamily. As to quaternary structure, homodimer. Zn(2+) serves as cofactor.

The enzyme catalyses (S)-dihydroorotate + H2O = N-carbamoyl-L-aspartate + H(+). The protein operates within pyrimidine metabolism; UMP biosynthesis via de novo pathway; (S)-dihydroorotate from bicarbonate: step 3/3. Its function is as follows. Catalyzes the reversible cyclization of carbamoyl aspartate to dihydroorotate. The chain is Dihydroorotase from Shewanella amazonensis (strain ATCC BAA-1098 / SB2B).